The chain runs to 632 residues: Fem-3 mRNA-binding factor 2 (632 aa).

Residues 1–11 show a composition bias toward basic residues; sequence MDQSKMRRTNQ. A disordered region spans residues 1–37; it reads MDQSKMRRTNQFRKTSQKPPSTGIDSYPTPAQSPMAQ. Residues 12–35 are compositionally biased toward polar residues; it reads FRKTSQKPPSTGIDSYPTPAQSPM. The 405-residue stretch at 162–566 folds into the PUM-HD domain; it reads TRSNNVLPTW…KMIETLANLR (405 aa). Pumilio repeat units follow at residues 187–225, 226–264, 271–307, 308–332, 345–384, 400–436, 438–473, and 484–521; these read EVLD…QLFE, QVIG…GYTK, NFIS…KLVQ, ALPR…QKVV, DFVA…DLTS, SVTN…CIIE, CLMR…EMMD, and DTGK…RQTK. The interval 609–632 is disordered; it reads MLEPRSNKSSVSVKFSSSGSHGDD. Over residues 615–632 the composition is skewed to low complexity; sequence NKSSVSVKFSSSGSHGDD.

Interacts (via C-terminus) with gld-3 isoform A in an RNA-independent manner. Interacts with dlc-1, and is required for the localization of fbf-2 to P granules. Interacts (via RNA-binding domain) with lst-1, probably displaces bound auto-inhibitory C-terminal tail and alters its RNA-binding affinity. Expressed specifically in the germline (at protein level).

The protein resides in the cytoplasm. It is found in the cytoplasmic granule. Its function is as follows. RNA-binding protein that binds to the consensus sequence 5'-UGUGCCAUA-3' in mRNA 3'-UTRs. Involved in the control of stem cells and sex determination in the C.elegans hermaphrodite germline. May also play a role in the hermaphrodite germline proliferation and oogenesis. By binding to the 3'-UTR, represses phosphatase lip-1 expression in the distal part of the germline mitotic zone. Binds specifically to the regulatory region of fem-3 3'-UTR and mediates the sperm/oocyte switch. Negatively regulates gld-3 expression possibly by directly binding to two sites within the gld-3 isoform b 3'-UTR. Suppresses germline tumor formation by preventing the dedifferentiation of secondary spermatocytes. C-terminal disordered region probably auto-inhibits RNA binding; auto-inhibition may be reversed by interaction with lst-1. The chain is Fem-3 mRNA-binding factor 2 from Caenorhabditis elegans.